The primary structure comprises 216 residues: UPF0323 lipoprotein HPG27_212 (216 aa).

A signal peptide spans Met-1–Gly-27. The N-palmitoyl cysteine moiety is linked to residue Cys-28. Cys-28 carries the S-diacylglycerol cysteine lipid modification. The segment covering Gln-159–Arg-170 has biased composition (polar residues). Positions Gln-159–Ser-216 are disordered. Low complexity predominate over residues Ser-171–Ser-209.

The protein belongs to the UPF0323 family.

Its subcellular location is the cell membrane. This is UPF0323 lipoprotein HPG27_212 from Helicobacter pylori (strain G27).